The chain runs to 87 residues: NADH-ubiquinone oxidoreductase chain 4L (87 aa).

Helical transmembrane passes span 1 to 21 (MNLS…NRKN), 22 to 42 (IILM…LVLI), and 57 to 77 (LYII…LVAF).

It belongs to the complex I subunit 4L family. As to quaternary structure, core subunit of respiratory chain NADH dehydrogenase (Complex I) which is composed of 45 different subunits.

The protein resides in the mitochondrion inner membrane. It catalyses the reaction a ubiquinone + NADH + 5 H(+)(in) = a ubiquinol + NAD(+) + 4 H(+)(out). Core subunit of the mitochondrial membrane respiratory chain NADH dehydrogenase (Complex I) which catalyzes electron transfer from NADH through the respiratory chain, using ubiquinone as an electron acceptor. This Moniliophthora perniciosa (strain FA553 / isolate CP02) (Witches'-broom disease fungus) protein is NADH-ubiquinone oxidoreductase chain 4L (ND4L).